The primary structure comprises 104 residues: Large ribosomal subunit protein eL30 (104 aa).

This sequence belongs to the eukaryotic ribosomal protein eL30 family.

The chain is Large ribosomal subunit protein eL30 (RPL30) from Tetrahymena thermophila (strain SB210).